The chain runs to 361 residues: Biotin synthase (361 aa).

Residues 83-308 enclose the Radical SAM core domain; it reads PEVEVEGIIS…RTILRYAGGR (226 aa). [4Fe-4S] cluster is bound by residues C98, C102, and C105. Residues C141, C174, C233, and R303 each coordinate [2Fe-2S] cluster.

It belongs to the radical SAM superfamily. Biotin synthase family. As to quaternary structure, homodimer. [4Fe-4S] cluster is required as a cofactor. [2Fe-2S] cluster serves as cofactor.

The enzyme catalyses (4R,5S)-dethiobiotin + (sulfur carrier)-SH + 2 reduced [2Fe-2S]-[ferredoxin] + 2 S-adenosyl-L-methionine = (sulfur carrier)-H + biotin + 2 5'-deoxyadenosine + 2 L-methionine + 2 oxidized [2Fe-2S]-[ferredoxin]. The protein operates within cofactor biosynthesis; biotin biosynthesis; biotin from 7,8-diaminononanoate: step 2/2. In terms of biological role, catalyzes the conversion of dethiobiotin (DTB) to biotin by the insertion of a sulfur atom into dethiobiotin via a radical-based mechanism. The chain is Biotin synthase from Parafrankia sp. (strain EAN1pec).